The sequence spans 316 residues: Transaldolase (316 aa).

Residue Lys-125 is the Schiff-base intermediate with substrate of the active site.

This sequence belongs to the transaldolase family. Type 1 subfamily. Homodimer.

It is found in the cytoplasm. It catalyses the reaction D-sedoheptulose 7-phosphate + D-glyceraldehyde 3-phosphate = D-erythrose 4-phosphate + beta-D-fructose 6-phosphate. The protein operates within carbohydrate degradation; pentose phosphate pathway; D-glyceraldehyde 3-phosphate and beta-D-fructose 6-phosphate from D-ribose 5-phosphate and D-xylulose 5-phosphate (non-oxidative stage): step 2/3. Functionally, transaldolase is important for the balance of metabolites in the pentose-phosphate pathway. This Verminephrobacter eiseniae (strain EF01-2) protein is Transaldolase.